We begin with the raw amino-acid sequence, 590 residues long: Arginine--tRNA ligase (590 aa).

The 'HIGH' region signature appears at 134 to 144 (ANPTGPMHVGH).

It belongs to the class-I aminoacyl-tRNA synthetase family. As to quaternary structure, monomer.

The protein localises to the cytoplasm. The catalysed reaction is tRNA(Arg) + L-arginine + ATP = L-arginyl-tRNA(Arg) + AMP + diphosphate. This chain is Arginine--tRNA ligase, found in Beijerinckia indica subsp. indica (strain ATCC 9039 / DSM 1715 / NCIMB 8712).